The sequence spans 204 residues: MNAELELLWPLSGLLLLLLLGTTAWLCVQCSRPGVKRNEKIYEQRNQQENEQSVASSQTYSLARPVRTGLQMDAASNKSFERKNKLLFSHLEGPESPRYQNFYKGSRRESDAAYVDPIPTDYYNWGCFQKPPEDNDSNSYENVLICKPSTPESGTEESEDYQNSVSILQWRESKRTMGARTSPSGSPDEEPDYVNGDVATTEKI.

Over 1 to 7 (MNAELEL) the chain is Extracellular. The helical; Signal-anchor for type III membrane protein transmembrane segment at 8–28 (LWPLSGLLLLLLLGTTAWLCV) threads the bilayer. 2 S-palmitoyl cysteine lipidation sites follow: C27 and C30. The Cytoplasmic segment spans residues 29 to 204 (QCSRPGVKRN…NGDVATTEKI (176 aa)). Y60 bears the Phosphotyrosine mark. S61 and S96 each carry phosphoserine. Residues Y140, Y161, and Y193 each carry the phosphotyrosine modification. Residues 147-204 (KPSTPESGTEESEDYQNSVSILQWRESKRTMGARTSPSGSPDEEPDYVNGDVATTEKI) form a disordered region.

In terms of assembly, when phosphorylated, interacts with GRB2. May also interact with SOS1, GAB1 and CBL. Post-translationally, phosphorylated on tyrosines following cross-linking of BCR in B-cells, high affinity IgG receptor (FCGR1) in myeloid cells, or high affinity IgE receptor (FCER1) in mast cells; which induces the recruitment of GRB2.

It is found in the cell membrane. Its function is as follows. Involved in FCER1 (high affinity immunoglobulin epsilon receptor)-mediated signaling in mast cells. May also be involved in BCR (B-cell antigen receptor)-mediated signaling in B-cells and FCGR1 (high affinity immunoglobulin gamma Fc receptor I)-mediated signaling in myeloid cells. Couples activation of these receptors and their associated kinases with distal intracellular events through the recruitment of GRB2. In Rattus norvegicus (Rat), this protein is Linker for activation of T-cells family member 2 (Lat2).